A 282-amino-acid polypeptide reads, in one-letter code: Kanosamine-6-phosphate phosphatase (282 aa).

The Nucleophile role is filled by Asp25. Mg(2+) contacts are provided by Asp25 and Asp27. Lys209 provides a ligand contact to phosphate. Mg(2+) contacts are provided by Asp232 and Ser233. Residue Asn235 participates in phosphate binding.

The protein belongs to the HAD-like hydrolase superfamily. Cof family. In terms of assembly, homotetramer. Mg(2+) serves as cofactor.

It carries out the reaction D-kanosamine 6-phosphate + H2O = kanosamine + phosphate. Its pathway is antibiotic biosynthesis; kanosamine biosynthesis. In terms of biological role, involved in the biosynthesis of kanosamine (3-amino-3-deoxy-D-glucose), which is known to have antibiotic and antifungal properties, and to be a precursor of the antibiotic neotrehalosadiamine (3,3'-diamino-3,3'-dideoxy-alpha,beta-trehalose (NTD)). Catalyzes the dephosphorylation of kanosamine 6-phosphate to yield kanosamine. There is a trace amount of activity using glucosamine-6-phosphate. The sequence is that of Kanosamine-6-phosphate phosphatase (ntdB) from Bacillus subtilis (strain 168).